We begin with the raw amino-acid sequence, 212 residues long: Ras-related protein Rab-2A (212 aa).

N-acetylalanine is present on Ala-2. A required for interaction with PRKCI region spans residues 2–19 (AYAYLFKYIIIGDTGVGK). GTP is bound by residues Gly-16, Val-17, Gly-18, Lys-19, Ser-20, Cys-21, and Thr-38. Residue Ser-20 participates in Mg(2+) binding. The Switch 1 motif lies at 37–42 (LTIGVE). Thr-38 and Asp-61 together coordinate Mg(2+). The Switch 2 signature appears at 63–72 (AGQESFRSIT). Residues Gly-64, Asn-119, Lys-120, Asp-122, Ala-150, and Lys-151 each coordinate GTP. Residues Cys-211 and Cys-212 are each lipidated (S-geranylgeranyl cysteine).

This sequence belongs to the small GTPase superfamily. Rab family. As to quaternary structure, interacts with PRKCI. Interacts with TRIP11. Interacts (in GTP-bound form) with GARIN1B. Interacts (GTP-bound) with HOPS complex component VPS39; interaction contributes to obtaining a functional HOPS complex that promotes autophagosome-lysosome membrane fusion driven by STX17-SNAP29-VAMP8. May interact with VPS41. Requires Mg(2+) as cofactor. In terms of processing, prenylated. Prenylation is required for association with cellular membranes. As to expression, brain and parietal cells.

It localises to the endoplasmic reticulum-Golgi intermediate compartment membrane. The protein localises to the melanosome. Its subcellular location is the endoplasmic reticulum membrane. The protein resides in the golgi apparatus membrane. It is found in the cytoplasmic vesicle. It localises to the secretory vesicle. The protein localises to the acrosome. Its subcellular location is the autophagosome membrane. The enzyme catalyses GTP + H2O = GDP + phosphate + H(+). Regulated by guanine nucleotide exchange factors (GEFs) which promote the exchange of bound GDP for free GTP, GTPase activating proteins (GAPs) which increase the GTP hydrolysis activity, and GDP dissociation inhibitors (GDIs) which inhibit the dissociation of the nucleotide from the GTPase. Functionally, the small GTPases Rab are key regulators of intracellular membrane trafficking, from the formation of transport vesicles to their fusion with membranes. Rabs cycle between active GTP-bound and inactive GDP-bound states. In their active state, drive transport of vesicular carriers from donor organelles to acceptor organelles to regulate the membrane traffic that maintains organelle identity and morphology. RAB2A regulates autophagy by promoting autophagosome-lysosome fusion via recruitment of the HOPS endosomal tethering complex; this process involves autophagosomal RAB2A and lysosomal RAB39A recruitment of HOPS subcomplexes VPS39-VPS11 and VPS41-VPS16-VPS18-VPS33A, respectively, which assemble into a functional complex to mediate membrane tethering and SNAREs-driven membrane fusion. Required for protein transport from the endoplasmic reticulum to the Golgi complex. Regulates the compacted morphology of the Golgi. Together with RAB2B, redundantly required for efficient autophagic flux. This is Ras-related protein Rab-2A (RAB2A) from Oryctolagus cuniculus (Rabbit).